The following is a 130-amino-acid chain: MKFRKGRPKIPRLISEEPQFKLFKPAGTPGIELESEVLSFEELESLRLVDYLNQPHEEAADAMGISRRVFWNILKSARKKVADALINGKMIDIGGGYYKIRECNYEDECQRGRNCRYGVSNCLTLKKDSE.

The protein belongs to the UPF0251 family.

The protein is UPF0251 protein MmarC5_0986 of Methanococcus maripaludis (strain C5 / ATCC BAA-1333).